The sequence spans 227 residues: Cytochrome c oxidase subunit 2 (227 aa).

The Mitochondrial intermembrane portion of the chain corresponds to 1 to 14; sequence MAYPFQLGLQDASS. A helical transmembrane segment spans residues 15-45; sequence PIMEELTNFHDHTLMIVFLISSLVLYIISSM. The Mitochondrial matrix portion of the chain corresponds to 46–59; that stretch reads LTTKMTHTSTMDAQ. Residues 60 to 87 form a helical membrane-spanning segment; that stretch reads EVETIWTVLPAVILILIALPSLRILYMM. The Mitochondrial intermembrane segment spans residues 88 to 227; that stretch reads DEINNPVLTV…HFENWSTSMI (140 aa). Cu cation contacts are provided by H161, C196, E198, C200, H204, and M207. Position 198 (E198) interacts with Mg(2+).

Belongs to the cytochrome c oxidase subunit 2 family. As to quaternary structure, component of the cytochrome c oxidase (complex IV, CIV), a multisubunit enzyme composed of 14 subunits. The complex is composed of a catalytic core of 3 subunits MT-CO1, MT-CO2 and MT-CO3, encoded in the mitochondrial DNA, and 11 supernumerary subunits COX4I, COX5A, COX5B, COX6A, COX6B, COX6C, COX7A, COX7B, COX7C, COX8 and NDUFA4, which are encoded in the nuclear genome. The complex exists as a monomer or a dimer and forms supercomplexes (SCs) in the inner mitochondrial membrane with NADH-ubiquinone oxidoreductase (complex I, CI) and ubiquinol-cytochrome c oxidoreductase (cytochrome b-c1 complex, complex III, CIII), resulting in different assemblies (supercomplex SCI(1)III(2)IV(1) and megacomplex MCI(2)III(2)IV(2)). Found in a complex with TMEM177, COA6, COX18, COX20, SCO1 and SCO2. Interacts with TMEM177 in a COX20-dependent manner. Interacts with COX20. Interacts with COX16. Cu cation is required as a cofactor.

The protein localises to the mitochondrion inner membrane. The catalysed reaction is 4 Fe(II)-[cytochrome c] + O2 + 8 H(+)(in) = 4 Fe(III)-[cytochrome c] + 2 H2O + 4 H(+)(out). Its function is as follows. Component of the cytochrome c oxidase, the last enzyme in the mitochondrial electron transport chain which drives oxidative phosphorylation. The respiratory chain contains 3 multisubunit complexes succinate dehydrogenase (complex II, CII), ubiquinol-cytochrome c oxidoreductase (cytochrome b-c1 complex, complex III, CIII) and cytochrome c oxidase (complex IV, CIV), that cooperate to transfer electrons derived from NADH and succinate to molecular oxygen, creating an electrochemical gradient over the inner membrane that drives transmembrane transport and the ATP synthase. Cytochrome c oxidase is the component of the respiratory chain that catalyzes the reduction of oxygen to water. Electrons originating from reduced cytochrome c in the intermembrane space (IMS) are transferred via the dinuclear copper A center (CU(A)) of subunit 2 and heme A of subunit 1 to the active site in subunit 1, a binuclear center (BNC) formed by heme A3 and copper B (CU(B)). The BNC reduces molecular oxygen to 2 water molecules using 4 electrons from cytochrome c in the IMS and 4 protons from the mitochondrial matrix. The polypeptide is Cytochrome c oxidase subunit 2 (MT-CO2) (Lophuromys flavopunctatus (Yellow-spotted brush-furred rat)).